Here is a 278-residue protein sequence, read N- to C-terminus: Elongation factor Ts (278 aa).

Positions 80 to 83 (TDFV) are involved in Mg(2+) ion dislocation from EF-Tu.

The protein belongs to the EF-Ts family.

It is found in the cytoplasm. Associates with the EF-Tu.GDP complex and induces the exchange of GDP to GTP. It remains bound to the aminoacyl-tRNA.EF-Tu.GTP complex up to the GTP hydrolysis stage on the ribosome. The protein is Elongation factor Ts of Arthrobacter sp. (strain FB24).